The sequence spans 220 residues: Kinetochore protein Spc25 (220 aa).

A coiled-coil region spans residues 79 to 114; that stretch reads HLTQEVEAIKLRNLAMKDQIKQQKMLNNQRKNEIME.

Belongs to the SPC25 family. In terms of assembly, component of the Ndc80 complex, which is composed of Ndc80, Nuf2 and Spc25.

The protein localises to the nucleus. Its subcellular location is the chromosome. The protein resides in the centromere. It localises to the kinetochore. Acts as a component of the essential kinetochore-associated Ndc80 complex, which is required for chromosome segregation and spindle checkpoint activity during meiosis and mitosis. Required for kinetochore integrity and the organization of stable microtubule binding sites in the outer plate of the kinetochore. Participates in SAC signaling that responds specifically to disruptions in spindle microtubule dynamics. The NDC80 complex synergistically enhances the affinity of the SKA1 complex for microtubules and may allow the NDC80 complex to track depolymerizing microtubules. In Drosophila orena (Fruit fly), this protein is Kinetochore protein Spc25.